Reading from the N-terminus, the 141-residue chain is Large ribosomal subunit protein uL11 (141 aa).

Belongs to the universal ribosomal protein uL11 family. Part of the ribosomal stalk of the 50S ribosomal subunit. Interacts with L10 and the large rRNA to form the base of the stalk. L10 forms an elongated spine to which L12 dimers bind in a sequential fashion forming a multimeric L10(L12)X complex. One or more lysine residues are methylated.

Forms part of the ribosomal stalk which helps the ribosome interact with GTP-bound translation factors. The chain is Large ribosomal subunit protein uL11 from Acetivibrio thermocellus (strain ATCC 27405 / DSM 1237 / JCM 9322 / NBRC 103400 / NCIMB 10682 / NRRL B-4536 / VPI 7372) (Clostridium thermocellum).